An 83-amino-acid polypeptide reads, in one-letter code: uncharacterized protein (83 aa).

A run of 3 helical transmembrane segments spans residues F7–Y26, L36–F58, and I65–F82.

Its subcellular location is the cell membrane. This is an uncharacterized protein from Archaeoglobus fulgidus (strain ATCC 49558 / DSM 4304 / JCM 9628 / NBRC 100126 / VC-16).